A 235-amino-acid chain; its full sequence is Lipoprotein-releasing system ATP-binding protein LolD (235 aa).

Positions 5–235 constitute an ABC transporter domain; the sequence is FALANIYKSF…SIDESGFNKI (231 aa). 40-47 is an ATP binding site; it reads GKSGSGKS.

This sequence belongs to the ABC transporter superfamily. Lipoprotein translocase (TC 3.A.1.125) family. The complex is composed of two ATP-binding proteins (LolD) and two transmembrane proteins (LolC and LolE).

Its subcellular location is the cell inner membrane. In terms of biological role, part of the ABC transporter complex LolCDE involved in the translocation of mature outer membrane-directed lipoproteins, from the inner membrane to the periplasmic chaperone, LolA. Responsible for the formation of the LolA-lipoprotein complex in an ATP-dependent manner. The chain is Lipoprotein-releasing system ATP-binding protein LolD from Ehrlichia chaffeensis (strain ATCC CRL-10679 / Arkansas).